Consider the following 132-residue polypeptide: Agouti-signaling protein (132 aa).

Positions 1-22 are cleaved as a signal peptide; the sequence is MDVTRLLLATLLVFLCFFTAYS. N-linked (GlcNAc...) asparagine glycosylation occurs at Asn-39. Residues 61-79 are compositionally biased toward basic and acidic residues; the sequence is EISRKEAEKKRSSKKEASM. A disordered region spans residues 61 to 87; the sequence is EISRKEAEKKRSSKKEASMKKVARPRT. Disulfide bonds link Cys-93/Cys-108, Cys-100/Cys-114, Cys-107/Cys-125, Cys-111/Cys-132, and Cys-116/Cys-123. One can recognise an Agouti domain in the interval 93–132; that stretch reads CVATRDSCKPPAPACCDPCASCQCRFFRSACSCRVLSLNC.

Its subcellular location is the secreted. Its function is as follows. Involved in the regulation of melanogenesis. The binding of ASP to MC1R precludes alpha-MSH initiated signaling and thus blocks production of cAMP, leading to a down-regulation of eumelanogenesis (brown/black pigment) and thus increasing synthesis of pheomelanin (yellow/red pigment). This is Agouti-signaling protein (ASIP) from Macaca fascicularis (Crab-eating macaque).